A 274-amino-acid polypeptide reads, in one-letter code: Probable WRKY transcription factor 49 (274 aa).

Residues Asn-108–Tyr-173 constitute a DNA-binding region (WRKY). A disordered region spans residues Lys-188–Gln-228. The stretch at Lys-193–His-222 forms a coiled coil. Over residues Asn-195–Gln-213 the composition is skewed to basic and acidic residues. Over residues Glu-216–Gln-228 the composition is skewed to polar residues.

It belongs to the WRKY group II-c family.

The protein resides in the nucleus. In terms of biological role, transcription factor. Interacts specifically with the W box (5'-(T)TGAC[CT]-3'), a frequently occurring elicitor-responsive cis-acting element. The polypeptide is Probable WRKY transcription factor 49 (WRKY49) (Arabidopsis thaliana (Mouse-ear cress)).